Consider the following 331-residue polypeptide: MVSSTSELITQPVNREEVVPSRKRIKLPAWLEVVKPRLIPLLLATTVGGMALSEEWPLPSPRLACTLGGGALAAAAAGALNCLWEQDLDKRMKRTSNRALPSGRLSQSSVFIGAVACTLVSSALLVSGVNCLAAGLTLLGLCSYVLLYTAFLKPRTSQNIVFGGVAGAIPPLVGASAAAGHIGLGGWWLFSLVMVWTPAHFWALAILLKEDYRSVGIPMLPTVSGPFVTAKAISVYGYLTVFLSFLGCFVLPEGGLLYGILLLPYNSRLLQLVSRLRDNPEDLDRAKGLFRWSILYMFGVCFLLVISRLQVSIVFNDQLIALIKDFSTGFS.

A run of 8 helical transmembrane segments spans residues 63–83 (LACTLGGGALAAAAAGALNCL), 109–129 (SVFIGAVACTLVSSALLVSGV), 132–152 (LAAGLTLLGLCSYVLLYTAFL), 160–180 (IVFGGVAGAIPPLVGASAAAG), 188–208 (WLFSLVMVWTPAHFWALAILL), 215–235 (VGIPMLPTVSGPFVTAKAISV), 241–261 (VFLSFLGCFVLPEGGLLYGIL), and 294–314 (ILYMFGVCFLLVISRLQVSIV).

Belongs to the UbiA prenyltransferase family. Protoheme IX farnesyltransferase subfamily.

It is found in the cell inner membrane. The enzyme catalyses heme b + (2E,6E)-farnesyl diphosphate + H2O = Fe(II)-heme o + diphosphate. It participates in porphyrin-containing compound metabolism; heme O biosynthesis; heme O from protoheme: step 1/1. Functionally, converts heme B (protoheme IX) to heme O by substitution of the vinyl group on carbon 2 of heme B porphyrin ring with a hydroxyethyl farnesyl side group. The chain is Protoheme IX farnesyltransferase from Prochlorococcus marinus (strain NATL2A).